The chain runs to 145 residues: Group IID secretory phospholipase A2 (145 aa).

The first 20 residues, 1 to 20 (MELALLCGLVVMAGVIPIQG), serve as a signal peptide directing secretion. Intrachain disulfides connect C46/C138, C48/C64, C63/C118, C69/C145, C70/C111, C79/C104, and C97/C109. 3 residues coordinate Ca(2+): H47, G49, and G51. Residue H67 is part of the active site. Residue D68 participates in Ca(2+) binding. A glycan (N-linked (GlcNAc...) asparagine) is linked at N89. The active site involves D112.

This sequence belongs to the phospholipase A2 family. The cofactor is Ca(2+). Highly expressed in pancreas and spleen and less abundantly in colon, thymus, placenta, small intestine, and prostate.

The protein resides in the secreted. The enzyme catalyses a 1,2-diacyl-sn-glycero-3-phosphoethanolamine + H2O = a 1-acyl-sn-glycero-3-phosphoethanolamine + a fatty acid + H(+). It catalyses the reaction 1-hexadecanoyl-2-(9Z-octadecenoyl)-sn-glycero-3-phosphoethanolamine + H2O = 1-hexadecanoyl-sn-glycero-3-phosphoethanolamine + (9Z)-octadecenoate + H(+). The catalysed reaction is 1-hexadecanoyl-2-(9Z,12Z-octadecadienoyl)-sn-glycero-3-phosphoethanolamine + H2O = 1-hexadecanoyl-sn-glycero-3-phosphoethanolamine + (9Z,12Z)-octadecadienoate + H(+). It carries out the reaction 1,2-dihexadecanoyl-sn-glycero-3-phospho-(1'-sn-glycerol) + H2O = 1-hexadecanoyl-sn-glycero-3-phospho-(1'-sn-glycerol) + hexadecanoate + H(+). The enzyme catalyses 1-hexadecanoyl-2-(9Z-octadecenoyl)-sn-glycero-3-phospho-(1'-sn-glycerol) + H2O = 1-hexadecanoyl-sn-glycero-3-phospho-(1'-sn-glycerol) + (9Z)-octadecenoate + H(+). It catalyses the reaction a 1,2-diacyl-sn-glycero-3-phosphocholine + H2O = a 1-acyl-sn-glycero-3-phosphocholine + a fatty acid + H(+). The catalysed reaction is 1,2-dihexadecanoyl-sn-glycero-3-phosphocholine + H2O = 1-hexadecanoyl-sn-glycero-3-phosphocholine + hexadecanoate + H(+). It carries out the reaction 1-hexadecanoyl-2-(9Z-octadecenoyl)-sn-glycero-3-phosphocholine + H2O = 1-hexadecanoyl-sn-glycero-3-phosphocholine + (9Z)-octadecenoate + H(+). The enzyme catalyses 1-hexadecanoyl-2-(9Z,12Z-octadecadienoyl)-sn-glycero-3-phosphocholine + H2O = (9Z,12Z)-octadecadienoate + 1-hexadecanoyl-sn-glycero-3-phosphocholine + H(+). It catalyses the reaction 1-hexadecanoyl-2-(4Z,7Z,10Z,13Z,16Z,19Z-docosahexaenoyl)-sn-glycero-3-phosphocholine + H2O = (4Z,7Z,10Z,13Z,16Z,19Z)-docosahexaenoate + 1-hexadecanoyl-sn-glycero-3-phosphocholine + H(+). Secretory calcium-dependent phospholipase A2 that primarily targets extracellular lipids, exerting anti-inflammatory and immunosuppressive functions. Hydrolyzes the ester bond of the fatty acyl group attached at sn-2 position of phospholipids (phospholipase A2 activity) with preference for phosphatidylethanolamines and phosphatidylglycerols over phosphatidylcholines. In draining lymph nodes, selectively hydrolyzes diacyl and alkenyl forms of phosphatidylethanolamines, releasing omega-3 polyunsaturated fatty acids (PUFAs) such as eicosapentaenoate and docosahexaenoate that are precursors of the anti-inflammatory lipid mediators, resolvins. During the resolution phase of acute inflammation drives docosahexaenoate-derived resolvin D1 synthesis, which suppresses dendritic cell activation and T-helper 1 immune response. May act in an autocrine and paracrine manner. Via a mechanism independent of its catalytic activity, promotes differentiation of regulatory T cells (Tregs) and participates in the maintenance of immune tolerance. May contribute to lipid remodeling of cellular membranes and generation of lipid mediators involved in pathogen clearance. Displays bactericidal activity against Gram-positive bacteria by directly hydrolyzing phospholipids of the bacterial membrane. In Homo sapiens (Human), this protein is Group IID secretory phospholipase A2 (PLA2G2D).